A 364-amino-acid polypeptide reads, in one-letter code: Fructose-bisphosphate aldolase A (364 aa).

Y5 carries the post-translational modification Phosphotyrosine. Residue T9 is modified to Phosphothreonine. S36 and S39 each carry phosphoserine. K42 bears the N6-acetyllysine; alternate mark. Residue K42 forms a Glycyl lysine isopeptide (Lys-Gly) (interchain with G-Cter in SUMO1); alternate linkage. A Glycyl lysine isopeptide (Lys-Gly) (interchain with G-Cter in SUMO2); alternate cross-link involves residue K42. R43 is a beta-D-fructose 1,6-bisphosphate binding site. S46 is subject to Phosphoserine. Residue K99 is modified to N6-(2-hydroxyisobutyryl)lysine. The residue at position 108 (K108) is an N6-acetyllysine. K111 is modified (N6-acetyllysine; alternate). An N6-malonyllysine; alternate modification is found at K111. At S132 the chain carries Phosphoserine. K147 is modified (N6-(2-hydroxyisobutyryl)lysine). Catalysis depends on E188, which acts as the Proton acceptor. Catalysis depends on K230, which acts as the Schiff-base intermediate with dihydroxyacetone-P. Position 272 is a phosphoserine (S272). Beta-D-fructose 1,6-bisphosphate contacts are provided by residues 272 to 274 (SGG), S301, and R304. K312 is subject to N6-malonyllysine. K330 carries the N6-acetyllysine modification.

Belongs to the class I fructose-bisphosphate aldolase family. Homotetramer. Interacts with SNX9 and WAS. Interacts with FBP2; the interaction blocks FBP2 inhibition by physiological concentrations of AMP and reduces inhibition by Ca(2+).

It is found in the cytoplasm. Its subcellular location is the myofibril. The protein localises to the sarcomere. The protein resides in the i band. It localises to the m line. The catalysed reaction is beta-D-fructose 1,6-bisphosphate = D-glyceraldehyde 3-phosphate + dihydroxyacetone phosphate. The protein operates within carbohydrate degradation; glycolysis; D-glyceraldehyde 3-phosphate and glycerone phosphate from D-glucose: step 4/4. In terms of biological role, catalyzes the reversible conversion of beta-D-fructose 1,6-bisphosphate (FBP) into two triose phosphate and plays a key role in glycolysis and gluconeogenesis. In addition, may also function as scaffolding protein. In Pongo abelii (Sumatran orangutan), this protein is Fructose-bisphosphate aldolase A (ALDOA).